The primary structure comprises 505 residues: Maturase K (505 aa).

Belongs to the intron maturase 2 family. MatK subfamily.

Its subcellular location is the plastid. It localises to the chloroplast. Functionally, usually encoded in the trnK tRNA gene intron. Probably assists in splicing its own and other chloroplast group II introns. The sequence is that of Maturase K from Gomphrena pulchella (Globe amaranth).